A 423-amino-acid polypeptide reads, in one-letter code: Gamma-glutamyl phosphate reductase (423 aa).

Belongs to the gamma-glutamyl phosphate reductase family.

Its subcellular location is the cytoplasm. It catalyses the reaction L-glutamate 5-semialdehyde + phosphate + NADP(+) = L-glutamyl 5-phosphate + NADPH + H(+). It functions in the pathway amino-acid biosynthesis; L-proline biosynthesis; L-glutamate 5-semialdehyde from L-glutamate: step 2/2. Catalyzes the NADPH-dependent reduction of L-glutamate 5-phosphate into L-glutamate 5-semialdehyde and phosphate. The product spontaneously undergoes cyclization to form 1-pyrroline-5-carboxylate. The sequence is that of Gamma-glutamyl phosphate reductase from Paraburkholderia xenovorans (strain LB400).